The chain runs to 409 residues: Magnesium-protoporphyrin IX monomethyl ester [oxidative] cyclase, chloroplastic (409 aa).

Disordered regions lie at residues 1–23 and 36–60; these read MAAE…SNPS and RMSA…TKKE. A chloroplast-targeting transit peptide spans 1–36; the sequence is MAAEMALVKPISKFSSPKLSNPSKFLSGRRFSTVIR. The span at 13 to 23 shows a compositional bias: polar residues; it reads KFSSPKLSNPS.

Belongs to the AcsF family. As to quaternary structure, part of the FLU-containing chloroplast membrane complex composed of FLU, CRD1, PORB, PORC, CHLP and HEMA1. Interacts with YCF54 in chloroplasts. Requires Fe cation as cofactor.

The protein localises to the plastid. It is found in the chloroplast inner membrane. Its subcellular location is the chloroplast thylakoid membrane. It catalyses the reaction Mg-protoporphyrin IX 13-monomethyl ester + 3 NADPH + 3 O2 + 2 H(+) = 3,8-divinyl protochlorophyllide a + 3 NADP(+) + 5 H2O. Its pathway is porphyrin-containing compound metabolism; chlorophyll biosynthesis. In terms of biological role, catalytic component of the MgProto monomethylester (MgProtoME) cyclase complex that catalyzes the formation of the isocyclic ring in chlorophyll biosynthesis. Mediates the cyclase reaction, which results in the formation of divinylprotochlorophyllide (Pchlide) characteristic of all chlorophylls from magnesium-protoporphyrin IX 13-monomethyl ester (MgPMME). The polypeptide is Magnesium-protoporphyrin IX monomethyl ester [oxidative] cyclase, chloroplastic (Arabidopsis thaliana (Mouse-ear cress)).